Consider the following 211-residue polypeptide: uncharacterized protein (211 aa).

2 disordered regions span residues 1–73 (MLRR…SKLK) and 96–123 (TNAAKEEKLRMAPSPTQSTRSESDASLS). 2 stretches are compositionally biased toward polar residues: residues 26–35 (SKSSLISLTS) and 53–62 (APSQFLSPTN). Low complexity predominate over residues 63-73 (KRSTSSQSKLK). Position 182 is a phosphoserine (Ser-182). The residue at position 184 (Thr-184) is a Phosphothreonine. Phosphoserine is present on Ser-186.

This is an uncharacterized protein from Saccharomyces cerevisiae (strain ATCC 204508 / S288c) (Baker's yeast).